Reading from the N-terminus, the 508-residue chain is Hydroxymethylglutaryl-CoA synthase, mitochondrial (508 aa).

The N-terminal 37 residues, M1 to S37, are a transit peptide targeting the mitochondrion. Position 52 is an N6-succinyllysine (K52). Residues E80 and A81 each coordinate (3S)-3-hydroxy-3-methylglutaryl-CoA. Residue K83 is modified to N6-acetyllysine; alternate. K83 carries the N6-succinyllysine; alternate modification. E132 serves as the catalytic Proton donor/acceptor. (3S)-3-hydroxy-3-methylglutaryl-CoA-binding residues include C166, N204, and T208. C166 acts as the Acyl-thioester intermediate in catalysis. K221 bears the N6-succinyllysine mark. At K243 the chain carries N6-acetyllysine. The residue at position 256 (K256) is an N6-acetyllysine; alternate. Position 256 is an N6-succinyllysine; alternate (K256). S258 and H301 together coordinate (3S)-3-hydroxy-3-methylglutaryl-CoA. The active-site Proton donor/acceptor is H301. Residue K306 is modified to N6-acetyllysine. K310 contacts (3S)-3-hydroxy-3-methylglutaryl-CoA. K310 bears the N6-acetyllysine; alternate mark. The residue at position 310 (K310) is an N6-succinyllysine; alternate. Residue K333 is modified to N6-succinyllysine. K342, K350, K354, and K358 each carry N6-acetyllysine; alternate. N6-succinyllysine; alternate is present on residues K342, K350, K354, and K358. Residues N380 and S414 each contribute to the (3S)-3-hydroxy-3-methylglutaryl-CoA site. S433 is modified (phosphoserine). K437 is modified (N6-acetyllysine). Phosphoserine is present on S440. K447 carries the N6-acetyllysine; alternate modification. The residue at position 447 (K447) is an N6-succinyllysine; alternate. At S456 the chain carries Phosphoserine. N6-acetyllysine; alternate is present on K473. At K473 the chain carries N6-succinyllysine; alternate. Phosphoserine is present on S477.

The protein belongs to the thiolase-like superfamily. HMG-CoA synthase family. As to quaternary structure, homodimer. In terms of processing, succinylated. Desuccinylated by SIRT5. Succinylation, at least at Lys-83 and Lys-310, inhibits the enzymatic activity. Expression in liver is 200-fold higher than in any other tissue. Low expression in colon, kidney, testis, and pancreas. Very low expression in heart and skeletal muscle. Not detected in brain. As to expression, highest expression detected in heart and skeletal muscle.

It is found in the mitochondrion. The catalysed reaction is acetoacetyl-CoA + acetyl-CoA + H2O = (3S)-3-hydroxy-3-methylglutaryl-CoA + CoA + H(+). It functions in the pathway metabolic intermediate biosynthesis; (R)-mevalonate biosynthesis; (R)-mevalonate from acetyl-CoA: step 2/3. Functionally, catalyzes the first irreversible step in ketogenesis, condensing acetyl-CoA to acetoacetyl-CoA to form HMG-CoA, which is converted by HMG-CoA reductase (HMGCR) into mevalonate. This chain is Hydroxymethylglutaryl-CoA synthase, mitochondrial (HMGCS2), found in Homo sapiens (Human).